Reading from the N-terminus, the 285-residue chain is Probable endonuclease 4 (285 aa).

Residues H69, H109, E145, D179, H182, H216, D229, H231, and E261 each coordinate Zn(2+).

Belongs to the AP endonuclease 2 family. The cofactor is Zn(2+).

The catalysed reaction is Endonucleolytic cleavage to 5'-phosphooligonucleotide end-products.. Endonuclease IV plays a role in DNA repair. It cleaves phosphodiester bonds at apurinic or apyrimidinic (AP) sites, generating a 3'-hydroxyl group and a 5'-terminal sugar phosphate. In Escherichia coli O81 (strain ED1a), this protein is Probable endonuclease 4.